Here is a 225-residue protein sequence, read N- to C-terminus: MAPRPLNEIVEAGWAKALEPVAGQITSMGEFLRAEIAAGRTYLPAGANVLRAFQQPFDDVRVLIVGQDPYPTPGHAVGLSFSVAPEVRPLPGSLVNIFRELNTDLNLPQPANGDLTPWTRQGVLLLNRALTTAPRKPAAHRGKGWEEVTEQAIRALAARGKPMVSILWGRDARNLRPLLGDLPALESAHPSPMSADRGFFGSRPFSRANDLLMRLGGQPVDWRLP.

The Proton acceptor role is filled by Asp-68.

This sequence belongs to the uracil-DNA glycosylase (UDG) superfamily. UNG family.

The protein resides in the cytoplasm. It catalyses the reaction Hydrolyzes single-stranded DNA or mismatched double-stranded DNA and polynucleotides, releasing free uracil.. Functionally, excises uracil residues from the DNA which can arise as a result of misincorporation of dUMP residues by DNA polymerase or due to deamination of cytosine. In Streptomyces coelicolor (strain ATCC BAA-471 / A3(2) / M145), this protein is Uracil-DNA glycosylase 1 (ung1).